We begin with the raw amino-acid sequence, 88 residues long: Phosphocarrier protein HPr (88 aa).

Residues M1–E88 enclose the HPr domain. The Pros-phosphohistidine intermediate role is filled by H15. The residue at position 46 (S46) is a Phosphoserine; by HPrK/P.

This sequence belongs to the HPr family.

Its subcellular location is the cytoplasm. With respect to regulation, phosphorylation on Ser-46 inhibits the phosphoryl transfer from enzyme I to HPr. Its function is as follows. General (non sugar-specific) component of the phosphoenolpyruvate-dependent sugar phosphotransferase system (sugar PTS). This major carbohydrate active-transport system catalyzes the phosphorylation of incoming sugar substrates concomitantly with their translocation across the cell membrane. The phosphoryl group from phosphoenolpyruvate (PEP) is transferred to the phosphoryl carrier protein HPr by enzyme I. Phospho-HPr then transfers it to the PTS EIIA domain. In terms of biological role, P-Ser-HPr interacts with the catabolite control protein A (CcpA), forming a complex that binds to DNA at the catabolite response elements cre, operator sites preceding a large number of catabolite-regulated genes. Thus, P-Ser-HPr is a corepressor in carbon catabolite repression (CCR), a mechanism that allows bacteria to coordinate and optimize the utilization of available carbon sources. P-Ser-HPr also plays a role in inducer exclusion, in which it probably interacts with several non-PTS permeases and inhibits their transport activity. The protein is Phosphocarrier protein HPr (ptsH) of Staphylococcus carnosus.